Consider the following 141-residue polypeptide: Molybdopterin synthase catalytic subunit 2 (141 aa).

Residues 37 to 39, 103 to 104, K119, and 126 to 128 each bind substrate; these read MIR, HR, and KHQ.

The protein belongs to the MoaE family. As to quaternary structure, heterotetramer of 2 MoaD subunits and 2 MoaE subunits. Also stable as homodimer. The enzyme changes between these two forms during catalysis.

It catalyses the reaction 2 [molybdopterin-synthase sulfur-carrier protein]-C-terminal-Gly-aminoethanethioate + cyclic pyranopterin phosphate + H2O = molybdopterin + 2 [molybdopterin-synthase sulfur-carrier protein]-C-terminal Gly-Gly + 2 H(+). The protein operates within cofactor biosynthesis; molybdopterin biosynthesis. In terms of biological role, converts molybdopterin precursor Z into molybdopterin. This requires the incorporation of two sulfur atoms into precursor Z to generate a dithiolene group. The sulfur is provided by MoaD. In Mycobacterium tuberculosis (strain CDC 1551 / Oshkosh), this protein is Molybdopterin synthase catalytic subunit 2 (moaE2).